The following is a 232-amino-acid chain: Nucleolar protein 16 (232 aa).

Residues 1–14 (MGRELQKRKKRSSR) show a composition bias toward basic residues. Disordered stretches follow at residues 1-20 (MGRE…VQTH) and 113-161 (RSDN…QSSR). The span at 132 to 154 (EEPKPKNPTHDIEWHGISDDRQE) shows a compositional bias: basic and acidic residues.

Belongs to the NOP16 family. Component of the pre-66S ribosomal particle.

It is found in the nucleus. The protein localises to the nucleolus. Its function is as follows. Involved in the biogenesis of the 60S ribosomal subunit. The chain is Nucleolar protein 16 (nop-16) from Neurospora crassa (strain ATCC 24698 / 74-OR23-1A / CBS 708.71 / DSM 1257 / FGSC 987).